Reading from the N-terminus, the 259-residue chain is Undecaprenyl-diphosphatase 4 (259 aa).

The next 8 membrane-spanning stretches (helical) occupy residues 1 to 21, 39 to 59, 71 to 91, 99 to 119, 133 to 153, 173 to 193, 208 to 228, and 239 to 259; these read MNWL…FLPI, AGLF…FIYY, FSKL…IGLL, ISKT…FLYV, ITYK…FPAI, AAYF…ILQF, SLIV…SWMI, and FAYY…TDVF.

The protein belongs to the UppP family.

It localises to the cell membrane. The enzyme catalyses di-trans,octa-cis-undecaprenyl diphosphate + H2O = di-trans,octa-cis-undecaprenyl phosphate + phosphate + H(+). Functionally, catalyzes the dephosphorylation of undecaprenyl diphosphate (UPP). Confers resistance to bacitracin. This Bacillus thuringiensis subsp. konkukian (strain 97-27) protein is Undecaprenyl-diphosphatase 4.